Here is an 860-residue protein sequence, read N- to C-terminus: Probable inorganic carbon transporter subunit DabA (860 aa).

Residues 1–32 (MTTTSLGADAAHTHAMVPSAIPPEGSDAAGPD) are disordered. 4 residues coordinate Zn(2+): Cys-369, Asp-371, His-551, and Cys-566.

The protein belongs to the inorganic carbon transporter (TC 9.A.2) DabA family. In terms of assembly, forms a complex with DabB. Zn(2+) serves as cofactor.

The protein resides in the cell inner membrane. Part of an energy-coupled inorganic carbon pump. The polypeptide is Probable inorganic carbon transporter subunit DabA (Ralstonia pickettii (strain 12D)).